Reading from the N-terminus, the 449-residue chain is Methylenetetrahydrofolate--tRNA-(uracil-5-)-methyltransferase TrmFO (449 aa).

Position 10–15 (10–15 (GGGLAG)) interacts with FAD.

Belongs to the MnmG family. TrmFO subfamily. FAD is required as a cofactor.

Its subcellular location is the cytoplasm. The enzyme catalyses uridine(54) in tRNA + (6R)-5,10-methylene-5,6,7,8-tetrahydrofolate + NADH + H(+) = 5-methyluridine(54) in tRNA + (6S)-5,6,7,8-tetrahydrofolate + NAD(+). It carries out the reaction uridine(54) in tRNA + (6R)-5,10-methylene-5,6,7,8-tetrahydrofolate + NADPH + H(+) = 5-methyluridine(54) in tRNA + (6S)-5,6,7,8-tetrahydrofolate + NADP(+). Its function is as follows. Catalyzes the folate-dependent formation of 5-methyl-uridine at position 54 (M-5-U54) in all tRNAs. The protein is Methylenetetrahydrofolate--tRNA-(uracil-5-)-methyltransferase TrmFO of Sphingopyxis alaskensis (strain DSM 13593 / LMG 18877 / RB2256) (Sphingomonas alaskensis).